The chain runs to 485 residues: MKPTIALVGRPNVGKSTLFNRLTRTKDALVHDLPGLTRDRHYGHGKVGSKPYLVIDTGGFEPVVDSGILHEMAKQTLQAVDEADAVVFLVDGRTGLTPQDKIIADRLRQSPRPVYLAVNKGEGGNRAVLAAEFYELALGDPYVISGAHGDGVYYLIEDILEKFPEPEAEEADARHPVFAVIGRPNVGKSTLVNAILGEERVITFDMAGTTRDSIHIDFEREGKPFTIIDTAGVRRRGKVDEAVEKFSVIKAMQAVEAANVAVLVLDAQQDIADQDATIAGFALEAGRALVVAVNKWDGISEERREQVKRDINRKLYFLDFAKFHFISALKERGIDGLFDSIQAAYNAAMIKMPTPKITRVLQSAIERQQPPRAGLVRPKMRYAHQGGMNPPVIVVHGNSLHAISDSYTRYLTQTFRKAFNLQGTPLRIQYNVSENPYENAEDKPKKKPLRRVSLSNRIEKREGRKEEKNRFKKKTKVSVKKQFSK.

2 EngA-type G domains span residues 3-167 and 176-349; these read PTIA…PEPE and PVFA…NAAM. GTP contacts are provided by residues 9–16, 56–60, 119–122, 182–189, 229–233, and 294–297; these read GRPNVGKS, DTGGF, NKGE, DTAGV, and NKWD. The KH-like domain maps to 350–434; it reads IKMPTPKITR…PLRIQYNVSE (85 aa). Positions 435–485 are disordered; sequence NPYENAEDKPKKKPLRRVSLSNRIEKREGRKEEKNRFKKKTKVSVKKQFSK. Positions 457 to 469 are enriched in basic and acidic residues; the sequence is RIEKREGRKEEKN. Residues 470–485 show a composition bias toward basic residues; sequence RFKKKTKVSVKKQFSK.

It belongs to the TRAFAC class TrmE-Era-EngA-EngB-Septin-like GTPase superfamily. EngA (Der) GTPase family. Associates with the 50S ribosomal subunit.

Its function is as follows. GTPase that plays an essential role in the late steps of ribosome biogenesis. The sequence is that of GTPase Der from Neisseria meningitidis serogroup B (strain ATCC BAA-335 / MC58).